The following is a 245-amino-acid chain: Polynucleotide 3'-phosphatase (245 aa).

It belongs to the DNA 3' phosphatase family.

The protein resides in the nucleus. It carries out the reaction a 3'end (2'-deoxyribonucleotide 3'-phosphate)-DNA + H2O = a 3'-end 2'-deoxyribonucleotide-DNA + phosphate. Functionally, dephosphorylate DNA's 3'-phosphate termini. Has a role in the repair of breaks in single-stranded DNA. In Saccharomyces mikatae (Yeast), this protein is Polynucleotide 3'-phosphatase (TPP1).